We begin with the raw amino-acid sequence, 187 residues long: Homeobox protein engrailed-like ceh-16 (187 aa).

Disordered stretches follow at residues 14–43 (PYPCPSPTISTPATSPSSISPTFASPNGTP), 60–100 (SDRP…DQLD), and 144–167 (KSTSSVPRDRCSSVTPNPHNHPSI). Positions 20-39 (PTISTPATSPSSISPTFASP) are enriched in low complexity. The homeobox DNA-binding region spans 87 to 146 (EKRPRTAFTGDQLDRLKTEFRESRYLTEKRRQELAHELGLNESQIKIWFQNKRAKLKKST). A compositionally biased stretch (polar residues) spans 145 to 163 (STSSVPRDRCSSVTPNPHN).

The protein belongs to the engrailed homeobox family. Expressed in seam cells.

It is found in the nucleus. It localises to the cytoplasm. Its function is as follows. Transcriptional regulator which binds to DNA to regulate gene expression and promote seam cell development and differentiation during embryogenesis. Plays a role in maintaining the boundaries between the lateral rows of seam cells and the ventral and dorsal row of epidermal cells during embryonic development. Negatively regulates the expression of the fusion effector protein eff-1 to prevent seam cell fusion with the dorsal and ventral epidermal cells during embryonic elongation. Positively regulates seam cell self-renewal and expansion during the L2 larval stage to promote seam cell development. This role does not seem to be via regulation of eff-1 expression. Specifically, it is required for the asymmetric division of the V5.p seam cell during the L2 larval stage, and in turn the asymmetric nuclear distribution of pop-1 in V5.p daughter cells. This Caenorhabditis elegans protein is Homeobox protein engrailed-like ceh-16.